We begin with the raw amino-acid sequence, 699 residues long: MNPIVKSFEYGQHTVTLETGVIARQADAAVLASMGDTTVLVTVVGKKEAEAGRDFFPLTVNYQEKTYAAGKIPGGFFKREGRPSEDETLIARLIDRPIRPLFPNGFTNEVQVIITVVSVDPQIEPDIISMIGTSAALAISGIPFSGPLGAARVGYINGEYVLNPTVTQLANSQLNLVVAGTEGAVLMVESEAQALPEEVMLGSVVYGHDQQQVVIKAIAEFKAEAGKPAWNWTAPVANEALVAQVKELAEAGLAQAYQIQVKQERYAQVAVVKAAAKEALLAANPEVDLREVDGLLGSLEKKVVRGRIIRGEPRIDGREPDMVRALSVLAGVLPRTHGSALFTRGETQALVTCTLGTERDAQKIDSIMGERTNRFMLHYNFPPYSVGETGMVGSPKRREIGHGKLAWRGINAVMPTAEEFPYSVRVVSEITESNGSSSMASVCGTSLALMDAGVPIKTSVAGIAMGLVKEGDNFVVLSDILGDEDHLGDMDFKVAGTRDGVTALQMDIKIEGITKEIMEIALQQAYGARVHILNVMDQAIGSHRDDISDHAPRITTIKINPEKIRDVIGKGGAVIRALTEETGTTIELEDDGTVKIASSNGEATKEAIRRIEEITSEVEVGRIYNGKVIRIVDFGAFVNILPGKDGLVHISQISDERVANVSDHLELNQEVTVKVMEVDRQGRVRLSIKEAQTKEAAAE.

D485 and D491 together coordinate Mg(2+). One can recognise a KH domain in the interval 552 to 611 (PRITTIKINPEKIRDVIGKGGAVIRALTEETGTTIELEDDGTVKIASSNGEATKEAIRRI). In terms of domain architecture, S1 motif spans 621 to 689 (GRIYNGKVIR…RQGRVRLSIK (69 aa)).

Belongs to the polyribonucleotide nucleotidyltransferase family. In terms of assembly, component of the RNA degradosome, which is a multiprotein complex involved in RNA processing and mRNA degradation. It depends on Mg(2+) as a cofactor.

The protein localises to the cytoplasm. The enzyme catalyses RNA(n+1) + phosphate = RNA(n) + a ribonucleoside 5'-diphosphate. In terms of biological role, involved in mRNA degradation. Catalyzes the phosphorolysis of single-stranded polyribonucleotides processively in the 3'- to 5'-direction. This is Polyribonucleotide nucleotidyltransferase from Shewanella sp. (strain MR-7).